Consider the following 291-residue polypeptide: Energy-coupling factor transporter ATP-binding protein EcfA2 (291 aa).

The ABC transporter domain maps to 3–246 (ITFKDVSYTY…PEWLTSKQLG (244 aa)). ATP is bound at residue 40-47 (GHTGSGKS).

Belongs to the ABC transporter superfamily. Energy-coupling factor EcfA family. In terms of assembly, forms a stable energy-coupling factor (ECF) transporter complex composed of 2 membrane-embedded substrate-binding proteins (S component), 2 ATP-binding proteins (A component) and 2 transmembrane proteins (T component).

Its subcellular location is the cell membrane. ATP-binding (A) component of a common energy-coupling factor (ECF) ABC-transporter complex. Unlike classic ABC transporters this ECF transporter provides the energy necessary to transport a number of different substrates. This is Energy-coupling factor transporter ATP-binding protein EcfA2 from Latilactobacillus sakei subsp. sakei (strain 23K) (Lactobacillus sakei subsp. sakei).